The sequence spans 415 residues: Casein kinase I isoform delta (415 aa).

Residues 9-277 enclose the Protein kinase domain; the sequence is YRLGRKIGSG…YLRQLFRNLF (269 aa). ATP-binding positions include 15–23 and Lys-38; that span reads IGSGSFGDI. The Proton acceptor role is filled by Asp-128. The tract at residues 278–364 is centrosomal localization signal (CLS); the sequence is HRQGFSYDYV…TSPRPVSGME (87 aa). Over residues 301 to 315 the composition is skewed to basic and acidic residues; it reads ADDAERERRDREERL. Residues 301 to 415 are disordered; sequence ADDAERERRD…SSGLQSVVHR (115 aa). Positions 317-342 are autoinhibitory; sequence HSRNPATRGLPSTASGRLRGTQEVAP. Ser-328 and Ser-331 each carry phosphoserine. The segment covering 347 to 358 has biased composition (polar residues); the sequence is TPTSHTANTSPR. Residue Ser-370 is modified to Phosphoserine. Residue Arg-375 is modified to Omega-N-methylarginine. Polar residues predominate over residues 380–400; it reads NISSSDLTGRQDTSRMSTSQI. Phosphoserine occurs at positions 382, 383, 384, 407, and 411.

Belongs to the protein kinase superfamily. CK1 Ser/Thr protein kinase family. Casein kinase I subfamily. In terms of assembly, monomer. Component of the circadian core oscillator, which includes the CRY proteins, CLOCK, or NPAS2, ARTNL/BMAL1 or ARTNL2/BMAL2, CSNK1D and/or CSNK1E, TIMELESS and the PER proteins. Interacts with DNMT1 and MAP1A. Interacts directly with PER1 and PER2 which may lead to their degradation. Interacts with MAPT/TAU, SNAPIN, DBNDD2, AIB1/NCOA3 and ESR1. Interacts with AKAP9/AKAP450; this interaction promotes centrosomal subcellular location. Binds to tubulins in mitotic cells upon DNA damage. Interacts with GJA1. Interacts with DDX3X; this interaction enhances CSNK1D kinase activity in vitro, but it is unclear whether this interaction is physiologically relevant. Interacts with FAM83A, FAM83B, FAM83E and FAM83H (via DUF1669). Autophosphorylated on serine and threonine residues; this autophosphorylation represses activity. Reactivated by phosphatase-mediated dephosphorylation. May be dephosphorylated by PP1.

Its subcellular location is the cytoplasm. The protein localises to the nucleus. It localises to the cytoskeleton. It is found in the microtubule organizing center. The protein resides in the centrosome. Its subcellular location is the perinuclear region. The protein localises to the cell membrane. It localises to the spindle. It is found in the golgi apparatus. It carries out the reaction L-seryl-[protein] + ATP = O-phospho-L-seryl-[protein] + ADP + H(+). It catalyses the reaction L-threonyl-[protein] + ATP = O-phospho-L-threonyl-[protein] + ADP + H(+). The enzyme catalyses L-seryl-[tau protein] + ATP = O-phospho-L-seryl-[tau protein] + ADP + H(+). The catalysed reaction is L-threonyl-[tau protein] + ATP = O-phospho-L-threonyl-[tau protein] + ADP + H(+). Exhibits substrate-dependent heparin activation. Drug-mediated inhibition leads to a delay of the oscillations with the magnitude of this effect dependent upon the timing of drug administration. Inhibited by phosphorylation. Functionally, essential serine/threonine-protein kinase that regulates diverse cellular growth and survival processes including Wnt signaling, DNA repair and circadian rhythms. It can phosphorylate a large number of proteins. Casein kinases are operationally defined by their preferential utilization of acidic proteins such as caseins as substrates. Phosphorylates connexin-43/GJA1, MAP1A, SNAPIN, MAPT/TAU, TOP2A, DCK, HIF1A, EIF6, p53/TP53, DVL2, DVL3, ESR1, AIB1/NCOA3, DNMT1, PKD2, YAP1, PER1 and PER2. Central component of the circadian clock. In balance with PP1, determines the circadian period length through the regulation of the speed and rhythmicity of PER1 and PER2 phosphorylation. Controls PER1 and PER2 nuclear transport and degradation. YAP1 phosphorylation promotes its SCF(beta-TRCP) E3 ubiquitin ligase-mediated ubiquitination and subsequent degradation. DNMT1 phosphorylation reduces its DNA-binding activity. Phosphorylation of ESR1 and AIB1/NCOA3 stimulates their activity and coactivation. Phosphorylation of DVL2 and DVL3 regulates WNT3A signaling pathway that controls neurite outgrowth. Phosphorylates NEDD9/HEF1. EIF6 phosphorylation promotes its nuclear export. Triggers down-regulation of dopamine receptors in the forebrain. Activates DCK in vitro by phosphorylation. TOP2A phosphorylation favors DNA cleavable complex formation. May regulate the formation of the mitotic spindle apparatus in extravillous trophoblast. Modulates connexin-43/GJA1 gap junction assembly by phosphorylation. Probably involved in lymphocyte physiology. Regulates fast synaptic transmission mediated by glutamate. This is Casein kinase I isoform delta (CSNK1D) from Pongo abelii (Sumatran orangutan).